Consider the following 456-residue polypeptide: Endoglucanase A (456 aa).

Positions 1–30 (MSRIRRFLATALAAATAGVGAIVTAIASAG) are cleaved as a signal peptide. The catalytic stretch occupies residues 31-322 (PAHAYDSPFY…RAYELAMNAA (292 aa)). Aspartate 113 is an active-site residue. 2 cysteine pairs are disulfide-bonded: cysteine 114–cysteine 159 and cysteine 267–cysteine 302. Catalysis depends on aspartate 151, which acts as the Proton donor. The disordered stretch occupies residues 255–280 (SRNGNGPLGSEWCDPPGRATGTWSTT). Aspartate 300 serves as the catalytic Nucleophile. A disordered region spans residues 321–358 (AAPPTYSPSPTPSTPSPSPSQSDPGSPSPSPSQPPAGR). A linker ('hinge') (Pro-Ser box) region spans residues 323 to 355 (PPTYSPSPTPSTPSPSPSQSDPGSPSPSPSQPP). Residues 325-338 (TYSPSPTPSTPSPS) are compositionally biased toward pro residues. The 104-residue stretch at 353 to 456 (QPPAGRACEA…LSSSITCSAS (104 aa)) folds into the CBM2 domain. A disulfide bridge links cysteine 360 with cysteine 453.

This sequence belongs to the glycosyl hydrolase 6 (cellulase B) family.

It carries out the reaction Endohydrolysis of (1-&gt;4)-beta-D-glucosidic linkages in cellulose, lichenin and cereal beta-D-glucans.. The polypeptide is Endoglucanase A (celA) (Thermobispora bispora (Microbispora bispora)).